Here is a 200-residue protein sequence, read N- to C-terminus: NAD(P)H-quinone oxidoreductase subunit 6, chloroplastic (200 aa).

A run of 5 helical transmembrane segments spans residues Ile13–Ser33, Ile35–Ala55, Ala64–Ile84, Ile102–Ser122, and Leu156–Ile176.

This sequence belongs to the complex I subunit 6 family. NDH is composed of at least 16 different subunits, 5 of which are encoded in the nucleus.

Its subcellular location is the plastid. It localises to the chloroplast thylakoid membrane. The catalysed reaction is a plastoquinone + NADH + (n+1) H(+)(in) = a plastoquinol + NAD(+) + n H(+)(out). It catalyses the reaction a plastoquinone + NADPH + (n+1) H(+)(in) = a plastoquinol + NADP(+) + n H(+)(out). NDH shuttles electrons from NAD(P)H:plastoquinone, via FMN and iron-sulfur (Fe-S) centers, to quinones in the photosynthetic chain and possibly in a chloroplast respiratory chain. The immediate electron acceptor for the enzyme in this species is believed to be plastoquinone. Couples the redox reaction to proton translocation, and thus conserves the redox energy in a proton gradient. This is NAD(P)H-quinone oxidoreductase subunit 6, chloroplastic (ndhG) from Physcomitrium patens (Spreading-leaved earth moss).